The sequence spans 90 residues: UPF0298 protein YlbG (90 aa).

The protein belongs to the UPF0298 family.

It is found in the cytoplasm. The sequence is that of UPF0298 protein YlbG (ylbG) from Bacillus subtilis (strain 168).